A 75-amino-acid polypeptide reads, in one-letter code: Large ribosomal subunit protein bL31 (75 aa).

Belongs to the bacterial ribosomal protein bL31 family. Type A subfamily. In terms of assembly, part of the 50S ribosomal subunit.

Binds the 23S rRNA. The sequence is that of Large ribosomal subunit protein bL31 from Nitrobacter winogradskyi (strain ATCC 25391 / DSM 10237 / CIP 104748 / NCIMB 11846 / Nb-255).